Here is a 131-residue protein sequence, read N- to C-terminus: UPF0102 protein YraN (131 aa).

Residues 1–19 (MATVPTRSGSPRQLTTKQT) are compositionally biased toward polar residues. A disordered region spans residues 1-20 (MATVPTRSGSPRQLTTKQTG).

Belongs to the UPF0102 family.

This Escherichia coli O157:H7 protein is UPF0102 protein YraN.